A 626-amino-acid chain; its full sequence is Trehalase (626 aa).

2 helical membrane passes run 20–40 and 45–65; these read KLFL…FIYL and SLFF…MLDS. The alpha,alpha-trehalose site is built by Arg224, Asp232, Asn268, Arg277, Gln279, Arg344, and Glu346. Catalysis depends on proton donor/acceptor residues Asp380 and Glu580. 2 residues coordinate alpha,alpha-trehalose: Glu580 and Glu595.

Belongs to the glycosyl hydrolase 37 family. As to quaternary structure, forms homodimers. Highly expressed in flowers. Expressed at low levels in leaves and stems. Expressed in guard cells.

The protein resides in the cell membrane. It localises to the cytoplasm. Its subcellular location is the nucleus. It carries out the reaction alpha,alpha-trehalose + H2O = alpha-D-glucose + beta-D-glucose. Involved in the regulation of trehalose content by hydrolyzing trehalose to glucose. May play a role in the regulation of abscisic acid-induced stomatal closure in response to drought stress. The polypeptide is Trehalase (TRE1) (Arabidopsis thaliana (Mouse-ear cress)).